A 413-amino-acid polypeptide reads, in one-letter code: Serine hydroxymethyltransferase (413 aa).

Residues L117 and 121-123 contribute to the (6S)-5,6,7,8-tetrahydrofolate site; that span reads GHL. Residue K226 is modified to N6-(pyridoxal phosphate)lysine. 349–351 serves as a coordination point for (6S)-5,6,7,8-tetrahydrofolate; it reads SPF.

The protein belongs to the SHMT family. In terms of assembly, homodimer. Pyridoxal 5'-phosphate is required as a cofactor.

The protein resides in the cytoplasm. The enzyme catalyses (6R)-5,10-methylene-5,6,7,8-tetrahydrofolate + glycine + H2O = (6S)-5,6,7,8-tetrahydrofolate + L-serine. It participates in one-carbon metabolism; tetrahydrofolate interconversion. Its pathway is amino-acid biosynthesis; glycine biosynthesis; glycine from L-serine: step 1/1. Its function is as follows. Catalyzes the reversible interconversion of serine and glycine with tetrahydrofolate (THF) serving as the one-carbon carrier. This reaction serves as the major source of one-carbon groups required for the biosynthesis of purines, thymidylate, methionine, and other important biomolecules. Also exhibits THF-independent aldolase activity toward beta-hydroxyamino acids, producing glycine and aldehydes, via a retro-aldol mechanism. The protein is Serine hydroxymethyltransferase of Listeria monocytogenes serotype 4b (strain F2365).